The chain runs to 502 residues: Regulator of hypoxia-inducible factor 1 (502 aa).

The next 11 membrane-spanning stretches (helical) occupy residues 54–74 (LLAWMTLVVIGTLAPVSVFSC), 92–112 (LDVLDIFRFVAILWVMLNHTG), 138–158 (IFGALMGNSALGVEIFLVLSG), 188–208 (LAPSMFIFVYIAAGPIMNALL), 241–261 (MGYLWYLGLDMQLYMVAPIFL), 272–292 (MALTITTIIASMVIRAGYCTA), 335–355 (GPFLIGLLLGYITVSSKYIMV), 367–387 (LIVAIATIYAILPEYWNPNAG), 396–416 (TAVFRSVFAMAISGMIAALYF), 437–457 (AYLLHMPVVYIFNWLPFLQAA), and 465–485 (LVLPFVAILSFIAALIFYLFI).

In terms of tissue distribution, expressed in intestine, some sensory neurons in the head, body wall muscles and socket cells.

Its subcellular location is the endoplasmic reticulum membrane. In terms of biological role, involved in the response to variation in environmental oxygen levels by inhibiting hif-1-mediated gene transcription in a vhl-1-independent manner. Plays a role in susceptibility to killing mediated by P.aeruginosa and by pore-forming toxins produced by B.thuringiensis. Probably by preventing hif-1 transcriptional activity, regulates behavioral responses, such as locomotion speed following acute reoxygenation. Plays a role in normal egg-laying probably by regulating spermatogenesis and in body morphogenesis. This chain is Regulator of hypoxia-inducible factor 1, found in Caenorhabditis elegans.